We begin with the raw amino-acid sequence, 317 residues long: tRNA(Ile)-lysidine synthase (317 aa).

30 to 35 is an ATP binding site; sequence SGGSDS.

It belongs to the tRNA(Ile)-lysidine synthase family.

Its subcellular location is the cytoplasm. The catalysed reaction is cytidine(34) in tRNA(Ile2) + L-lysine + ATP = lysidine(34) in tRNA(Ile2) + AMP + diphosphate + H(+). Functionally, ligates lysine onto the cytidine present at position 34 of the AUA codon-specific tRNA(Ile) that contains the anticodon CAU, in an ATP-dependent manner. Cytidine is converted to lysidine, thus changing the amino acid specificity of the tRNA from methionine to isoleucine. This chain is tRNA(Ile)-lysidine synthase, found in Chlamydia abortus (strain DSM 27085 / S26/3) (Chlamydophila abortus).